A 177-amino-acid polypeptide reads, in one-letter code: Large ribosomal subunit protein uL10 (177 aa).

The protein belongs to the universal ribosomal protein uL10 family. In terms of assembly, part of the ribosomal stalk of the 50S ribosomal subunit. The N-terminus interacts with L11 and the large rRNA to form the base of the stalk. The C-terminus forms an elongated spine to which L12 dimers bind in a sequential fashion forming a multimeric L10(L12)X complex.

Its function is as follows. Forms part of the ribosomal stalk, playing a central role in the interaction of the ribosome with GTP-bound translation factors. This chain is Large ribosomal subunit protein uL10, found in Caldanaerobacter subterraneus subsp. tengcongensis (strain DSM 15242 / JCM 11007 / NBRC 100824 / MB4) (Thermoanaerobacter tengcongensis).